The following is an 823-amino-acid chain: Bifunctional enzyme flvA (823 aa).

The pyridoxal 5'-phosphate-dependent lyase stretch occupies residues 56–535 (TAKFEMALMP…QRLYDAKFYI (480 aa)). At Lys331 the chain carries N6-(pyridoxal phosphate)lysine. The segment at 573 to 823 (DFDALQQVSH…TLPMNVPLWL (251 aa)) is alpha-ketoglutarate-dependent oxygenase. Fe cation is bound by residues His703 and Asp705.

It in the N-terminal section; belongs to the trans-sulfuration enzymes family. In the C-terminal section; belongs to the iron/ascorbate-dependent oxidoreductase family. Pyridoxal 5'-phosphate serves as cofactor. It depends on Fe(2+) as a cofactor.

It carries out the reaction O-acetyl-L-homoserine + 3-methyl-2-oxobutanoate = (6S)-6-amino-3,3-dimethyl-2-oxoheptanedioate + acetate + H(+). The catalysed reaction is (6S)-3,3-dimethylpiperidine-2,6-dicarboxylate + 2-oxoglutarate + AH2 + O2 + H(+) = (2S)-5,5-dimethylpiperidine-2-carboxylate + succinate + A + 2 CO2 + H2O. Its pathway is secondary metabolite biosynthesis; terpenoid biosynthesis. In terms of biological role, bifunctional enzyme; part of the gene cluster that mediates the biosynthesis of flavunoidine, an alkaloidal terpenoid with a tetracyclic cage-like core connected to dimethylcadaverine via a C-N bond and acylated with 5,5-dimethyl-L-pipecolate. The tetracyclic core is synthesized by the terpene cyclase flvE and the cytochrome P450 monooxygenase flvD. The terpene cyclase flvE catalyzes the cyclization of farnesyl pyrophosphate (FPP) to form (1R,4R,5S)-(+)-acoradiene and the cytochrome P450 monooxygenase flvD is then responsible for oxidative conversion of (1R,4R,5S)-(+)-acoradiene into the tetracyclic cage present in the final product flavunoidine. In parallel, the N-methyltransferase flvH dimethylates L-lysine to give N,N-dimethyl-L-Lysin which is decarboxylated by flvG to afford dimethylcadaverine. The terpene cyclase-like protein flvF is the enzyme that attaches the dimethylcadaverine precusor at the C-7 of the tetracyclic cage to yield pre-flavunoidine. The cytochrome monooxygenase flvC hydroxylates the C-10 position of pre-flavunoidine whereas the NRPS flvI acylates the terpenoid core at the hydroxylated C-10 with dimethylpipecolate to yield final flavunoidine. The bifunctional enzyme flvA and the dehydrogenase flvB are responsible for the synthesis of the dimethylpipecolate precursor. The PLP-dependent lyase domain of flvA might use L-O-acetyl-homoserine and alpha-keto-isovalerate to form an intermediary ketone that can cyclize intramolecularly to yield an imine. The imine can be reduced by flvB to yield the 6-carboxylated pipecolate. The C-terminal alpha-KG-dependent oxygenase domain of flvA is then proposed to catalyze the decarboxylation to yield dimethylpipecolate. The chain is Bifunctional enzyme flvA from Aspergillus flavus (strain ATCC 200026 / FGSC A1120 / IAM 13836 / NRRL 3357 / JCM 12722 / SRRC 167).